We begin with the raw amino-acid sequence, 71 residues long: Long neurotoxin 3 (71 aa).

Intrachain disulfides connect C3–C20, C14–C41, C26–C30, C45–C56, and C57–C62.

The protein belongs to the three-finger toxin family. Long-chain subfamily. Type II alpha-neurotoxin sub-subfamily. As to expression, expressed by the venom gland.

Its subcellular location is the secreted. In terms of biological role, binds with high affinity to muscular (alpha-1/CHRNA1) and neuronal (alpha-7/CHRNA7) nicotinic acetylcholine receptor (nAChR) and inhibits acetylcholine from binding to the receptor, thereby impairing neuromuscular and neuronal transmission. The chain is Long neurotoxin 3 from Naja naja (Indian cobra).